The primary structure comprises 505 residues: uncharacterized protein (505 aa).

Residues 461 to 480 are disordered; that stretch reads RTDVHPGNSDDEGAYSSADS.

This sequence to M.jannaschii MJ0787.

This is an uncharacterized protein from Methanothermobacter thermautotrophicus (strain ATCC 29096 / DSM 1053 / JCM 10044 / NBRC 100330 / Delta H) (Methanobacterium thermoautotrophicum).